The sequence spans 198 residues: Ribonuclease HII (198 aa).

Residues 10–198 (HLVAGVDEVG…PVKRALELAS (189 aa)) form the RNase H type-2 domain. Asp16, Glu17, and Asp108 together coordinate a divalent metal cation.

Belongs to the RNase HII family. It depends on Mn(2+) as a cofactor. Mg(2+) is required as a cofactor.

It is found in the cytoplasm. It carries out the reaction Endonucleolytic cleavage to 5'-phosphomonoester.. In terms of biological role, endonuclease that specifically degrades the RNA of RNA-DNA hybrids. This Salmonella arizonae (strain ATCC BAA-731 / CDC346-86 / RSK2980) protein is Ribonuclease HII.